The sequence spans 408 residues: MGNCWCRFEPLNHRVSANAKSESPKEQSPTVEDKHIKEVQKLPSNPKEVEDLRRDSAANPLIAFTYEELKNITSNFRQDRVLGGGGFGSVYKGFIKEDLGDQEVPEPLPVAVKVHDGDNSFQGHREWLAEVIFLGQLSHPNLVKLIGYCCEDNHRVLIYEYMARGSVENNLFSRVLLPLSWAIRMKIAFGAAKGLAFLHEAKKPVIYRDFKTSNILLDMDYNAKLSDFGLAKDGPVGDKSHVSTRIMGTYGYAAPEYIMTGHLTPGSDVYSFGVVLLELLTGRKSLDKSRPTREQNLIDWALPLLKEKKKVLNIVDPKMNCEYPVKAVQKAAMLAYHCLNRNPKARPLMRDIVDSLEPLQATEEEALLVPPVQKAVITIIDEMPKNGLKKVEELKKVEEVKKVIEDAC.

A lipid anchor (N-myristoyl glycine) is attached at Gly-2. Cys-4 carries S-palmitoyl cysteine lipidation. The segment at 17 to 50 (ANAKSESPKEQSPTVEDKHIKEVQKLPSNPKEVE) is disordered. Residues 18 to 30 (NAKSESPKEQSPT) are compositionally biased toward polar residues. Residues 31 to 40 (VEDKHIKEVQ) are compositionally biased toward basic and acidic residues. The residue at position 65 (Thr-65) is a Phosphothreonine. A Protein kinase domain is found at 76–360 (FRQDRVLGGG…DIVDSLEPLQ (285 aa)). ATP-binding positions include 82-90 (LGGGGFGSV) and Lys-113. At Tyr-159 the chain carries Phosphotyrosine. The active-site Proton acceptor is Asp-209. Ser-213 and Ser-243 each carry phosphoserine. 2 positions are modified to phosphothreonine: Thr-244 and Thr-249. Residue Tyr-257 is modified to Phosphotyrosine.

It belongs to the protein kinase superfamily. Ser/Thr protein kinase family. Post-translationally, palmitoylation at Cys-4 and Cys-6 are required for plasma membrane location.

It localises to the cell membrane. The catalysed reaction is L-seryl-[protein] + ATP = O-phospho-L-seryl-[protein] + ADP + H(+). The enzyme catalyses L-threonyl-[protein] + ATP = O-phospho-L-threonyl-[protein] + ADP + H(+). Its function is as follows. May be involved in plant defense signaling. In Arabidopsis thaliana (Mouse-ear cress), this protein is Probable serine/threonine-protein kinase PBL16.